A 378-amino-acid polypeptide reads, in one-letter code: Spermidine/putrescine import ATP-binding protein PotA (378 aa).

Residues 18-248 enclose the ABC transporter domain; sequence VQLAGIRKCF…PKNLFVAGFI (231 aa). ATP is bound at residue 50–57; it reads GPSGCGKT.

It belongs to the ABC transporter superfamily. Spermidine/putrescine importer (TC 3.A.1.11.1) family. In terms of assembly, the complex is composed of two ATP-binding proteins (PotA), two transmembrane proteins (PotB and PotC) and a solute-binding protein (PotD).

It localises to the cell inner membrane. It carries out the reaction ATP + H2O + polyamine-[polyamine-binding protein]Side 1 = ADP + phosphate + polyamineSide 2 + [polyamine-binding protein]Side 1.. Its function is as follows. Part of the ABC transporter complex PotABCD involved in spermidine/putrescine import. Responsible for energy coupling to the transport system. The polypeptide is Spermidine/putrescine import ATP-binding protein PotA (Escherichia coli O1:K1 / APEC).